Consider the following 436-residue polypeptide: Fibrinogen gamma chain (436 aa).

A signal peptide spans 1–25; the sequence is MSWSLQPPSFLLCCLLLLFSPTGLA. N-linked (GlcNAc...) asparagine glycosylation is present at Asn77. One can recognise a Fibrinogen C-terminal domain in the interval 169–415; that stretch reads QIHDTTGKDC…ETTMKIIPFN (247 aa). The cysteines at positions 178 and 207 are disulfide-linked. Residues Asp343, Asp345, and Gly349 each contribute to the Ca(2+) site. A disulfide bridge links Cys351 with Cys364. Gln423 is covalently cross-linked (Isoglutamyl lysine isopeptide (Gln-Lys) (interchain with K-431)). Ser430 is modified (phosphoserine). An Isoglutamyl lysine isopeptide (Lys-Gln) (interchain with Q-423) cross-link involves residue Lys431.

As to quaternary structure, heterohexamer; disulfide linked. Contains 2 sets of 3 non-identical chains (alpha, beta and gamma). The 2 heterotrimers are in head to head conformation with the N-termini in a small central domain. In terms of processing, conversion of fibrinogen to fibrin is triggered by thrombin, which cleaves fibrinopeptides A and B from alpha and beta chains, and thus exposes the N-terminal polymerization sites responsible for the formation of the soft clot. The soft clot is converted into the hard clot by factor XIIIA which catalyzes the epsilon-(gamma-glutamyl)lysine cross-linking between gamma chains (stronger) and between alpha chains (weaker) of different monomers.

The protein localises to the secreted. Functionally, together with fibrinogen alpha (FGA) and fibrinogen beta (FGB), polymerizes to form an insoluble fibrin matrix. Fibrin has a major function in hemostasis as one of the primary components of blood clots. In addition, functions during the early stages of wound repair to stabilize the lesion and guide cell migration during re-epithelialization. Was originally thought to be essential for platelet aggregation, based on in vitro studies using anticoagulated blood. However, subsequent studies have shown that it is not absolutely required for thrombus formation in vivo. Enhances expression of SELP in activated platelets via an ITGB3-dependent pathway. Maternal fibrinogen is essential for successful pregnancy. Fibrin deposition is also associated with infection, where it protects against IFNG-mediated hemorrhage. May also facilitate the immune response via both innate and T-cell mediated pathways. This is Fibrinogen gamma chain (Fgg) from Mus musculus (Mouse).